A 65-amino-acid polypeptide reads, in one-letter code: Conotoxin mr5.1b (65 aa).

An N-terminal signal peptide occupies residues 1–19 (MRCVPVFVILLLLIASAPS). The propeptide occupies 20-48 (VDARLKTKDDMPLPSSHANIKRTLQMLRN). Position 60 is a 4-carboxyglutamate (Glu-60).

This sequence belongs to the conotoxin T superfamily. In terms of processing, contains 2 disulfide bonds that can be either 'C1-C3, C2-C4' or 'C1-C4, C2-C3', since these disulfide connectivities have been observed for conotoxins with cysteine framework V (for examples, see AC P0DQQ7 and AC P81755). As to expression, expressed by the venom duct.

It localises to the secreted. In Conus marmoreus (Marble cone), this protein is Conotoxin mr5.1b.